The sequence spans 222 residues: UPF0758 protein YicR (222 aa).

Residues P100–I222 enclose the MPN domain. Zn(2+) is bound by residues H171, H173, and D184. A JAMM motif motif is present at residues H171–D184.

This sequence belongs to the UPF0758 family. YicR subfamily.

The protein is UPF0758 protein YicR of Escherichia coli (strain K12 / MC4100 / BW2952).